Here is a 292-residue protein sequence, read N- to C-terminus: 4-amino-L-phenylalanine/4-methylamino-L-phenylalanine methyltransferase (292 aa).

128-132 contributes to the S-adenosyl-L-methionine binding site; it reads CAGPG.

The protein belongs to the protein N5-glutamine methyltransferase family.

It catalyses the reaction 4-amino-L-phenylalanine + S-adenosyl-L-methionine = 4-methylamino-L-phenylalanine + S-adenosyl-L-homocysteine + H(+). The enzyme catalyses 4-methylamino-L-phenylalanine + S-adenosyl-L-methionine = 4-dimethylamino-L-phenylalanine + S-adenosyl-L-homocysteine + H(+). It participates in antibiotic biosynthesis. Its function is as follows. Involved in pristinamycin I biosynthesis. Catalyzes the SAM-dependent methylation of 4-amino-L-phenylalanine (PAPA) to 4-methylamino-L-phenylalanine (MMPAPA), and of MMPAPA to 4-dimethylamino-L-phenylalanine (DMPAPA). The sequence is that of 4-amino-L-phenylalanine/4-methylamino-L-phenylalanine methyltransferase from Streptomyces pristinaespiralis.